The chain runs to 151 residues: Small ribosomal subunit protein uS11 (151 aa).

Positions 131–151 (DVTPVPSDSTRRKGGRRGRRL) are disordered. The span at 142 to 151 (RKGGRRGRRL) shows a compositional bias: basic residues.

This sequence belongs to the universal ribosomal protein uS11 family.

The chain is Small ribosomal subunit protein uS11 from Bombyx mori (Silk moth).